Reading from the N-terminus, the 284-residue chain is Efem/EfeO family lipoprotein (284 aa).

The signal sequence occupies residues Met1–Ala17. The N-palmitoyl cysteine moiety is linked to residue Cys18. The S-diacylglycerol cysteine moiety is linked to residue Cys18.

This sequence belongs to the EfeM/EfeO family.

The protein resides in the cell membrane. The polypeptide is Efem/EfeO family lipoprotein (Staphylococcus aureus (strain NCTC 8325 / PS 47)).